A 1193-amino-acid chain; its full sequence is Structural maintenance of chromosomes protein 3 homolog (1193 aa).

Residue 31 to 38 participates in ATP binding; that stretch reads GFNGSGKS. N6-acetyllysine is present on K101. 2 coiled-coil regions span residues 179–286 and 332–483; these read SKKV…LNKT and ILRV…EIIK. The region spanning 505–631 is the SMC hinge domain; that stretch reads ENILGFLIDN…VKSLESCENY (127 aa). Residues 665 to 993 adopt a coiled-coil conformation; that stretch reads TVYNKLKELK…SHKNIKDMIQ (329 aa).

Belongs to the SMC family. SMC3 subfamily. Component of the cohesin complex. Acetylation at Lys-101 by ESCO1 is important for genome stability and S phase sister chromatid cohesion.

It localises to the nucleus. Central component of cohesin, a complex required for chromosome cohesion during the cell cycle. The cohesin complex may form a large proteinaceous ring within which sister chromatids can be trapped. At anaphase, the complex is cleaved and dissociates from chromatin, allowing sister chromatids to segregate. Cohesion is coupled to DNA replication and is involved in DNA repair. The cohesin complex also plays an important role in spindle pole assembly during mitosis and in chromosomes movement. The sequence is that of Structural maintenance of chromosomes protein 3 homolog from Plasmodium falciparum (isolate 3D7).